Consider the following 438-residue polypeptide: Glucose-6-phosphate isomerase (438 aa).

The active-site Proton donor is Glu-289. Active-site residues include His-310 and Lys-424.

The protein belongs to the GPI family.

The protein localises to the cytoplasm. It carries out the reaction alpha-D-glucose 6-phosphate = beta-D-fructose 6-phosphate. Its pathway is carbohydrate biosynthesis; gluconeogenesis. The protein operates within carbohydrate degradation; glycolysis; D-glyceraldehyde 3-phosphate and glycerone phosphate from D-glucose: step 2/4. Functionally, catalyzes the reversible isomerization of glucose-6-phosphate to fructose-6-phosphate. In Oenococcus oeni (strain ATCC BAA-331 / PSU-1), this protein is Glucose-6-phosphate isomerase.